The chain runs to 297 residues: Virulence genes transcriptional activator SpvR (297 aa).

Positions 1–61 (MDFLINKKLK…IRKNGTLIPT (61 aa)) constitute an HTH lysR-type domain. The segment at residues 21–40 (FSIATSVLYITRTPLSRVIS) is a DNA-binding region (H-T-H motif).

The protein belongs to the LysR transcriptional regulatory family.

It is found in the cytoplasm. Its function is as follows. Positive regulator for the plasmid-encoded virulence factors SpvA, SpvB, and SpvC. This Salmonella dublin protein is Virulence genes transcriptional activator SpvR (spvR).